A 1058-amino-acid polypeptide reads, in one-letter code: Carbamoyl phosphate synthase large chain (1058 aa).

Residues 1-401 (MSKRKDIQKI…SLLKACRSLE (401 aa)) form a carboxyphosphate synthetic domain region. Residues R129, R169, G175, G176, R208, I210, E215, G241, I242, H243, Q284, and E298 each coordinate ATP. One can recognise an ATP-grasp 1 domain in the interval 133–327 (KQLMQELDQP…IAKLAAKIAV (195 aa)). The Mg(2+) site is built by Q284, E298, and N300. Mn(2+) is bound by residues Q284, E298, and N300. Residues 402–546 (IGVCHNEMTS…YSTYELENES (145 aa)) are oligomerization domain. Residues 547–929 (VQSNKESILV…ALYKAFEANN (383 aa)) are carbamoyl phosphate synthetic domain. The region spanning 671 to 861 (EKALKELGIP…MAQIATKLIL (191 aa)) is the ATP-grasp 2 domain. Residues R707, S746, I748, E752, G777, V778, H779, S780, Q820, and E832 each coordinate ATP. Mg(2+) is bound by residues Q820, E832, and N834. Positions 820, 832, and 834 each coordinate Mn(2+). Positions 930 to 1058 (SHLSEFGQIV…ESRCFNIEAI (129 aa)) constitute an MGS-like domain. Residues 930 to 1058 (SHLSEFGQIV…ESRCFNIEAI (129 aa)) form an allosteric domain region.

The protein belongs to the CarB family. Composed of two chains; the small (or glutamine) chain promotes the hydrolysis of glutamine to ammonia, which is used by the large (or ammonia) chain to synthesize carbamoyl phosphate. Tetramer of heterodimers (alpha,beta)4. It depends on Mg(2+) as a cofactor. The cofactor is Mn(2+).

The catalysed reaction is hydrogencarbonate + L-glutamine + 2 ATP + H2O = carbamoyl phosphate + L-glutamate + 2 ADP + phosphate + 2 H(+). It catalyses the reaction hydrogencarbonate + NH4(+) + 2 ATP = carbamoyl phosphate + 2 ADP + phosphate + 2 H(+). Its pathway is amino-acid biosynthesis; L-arginine biosynthesis; carbamoyl phosphate from bicarbonate: step 1/1. It functions in the pathway pyrimidine metabolism; UMP biosynthesis via de novo pathway; (S)-dihydroorotate from bicarbonate: step 1/3. Functionally, large subunit of the glutamine-dependent carbamoyl phosphate synthetase (CPSase). CPSase catalyzes the formation of carbamoyl phosphate from the ammonia moiety of glutamine, carbonate, and phosphate donated by ATP, constituting the first step of 2 biosynthetic pathways, one leading to arginine and/or urea and the other to pyrimidine nucleotides. The large subunit (synthetase) binds the substrates ammonia (free or transferred from glutamine from the small subunit), hydrogencarbonate and ATP and carries out an ATP-coupled ligase reaction, activating hydrogencarbonate by forming carboxy phosphate which reacts with ammonia to form carbamoyl phosphate. This Streptococcus pyogenes serotype M5 (strain Manfredo) protein is Carbamoyl phosphate synthase large chain.